Consider the following 559-residue polypeptide: Kelch repeat and BTB domain-containing protein 2 (559 aa).

The region spanning 26 to 95 is the BTB domain; sequence CDVIITIGDG…LYNRHISSMN (70 aa). Residues 128-223 form the BACK domain; the sequence is CIYIYHRLYE…CIDIQNLDKK (96 aa). 3 Kelch repeats span residues 305-352, 353-399, and 401-463; these read EIII…VIDD, MIYA…VFDQ, and IYII…SHKD.

As to quaternary structure, interacts (via BTB domain) with host CUL3.

It is found in the host cytoplasm. Functionally, probable substrate-specific adapter of CUL3-containing E3 ubiquitin-protein ligases which mediate the ubiquitination and subsequent proteasomal degradation of host target proteins. This chain is Kelch repeat and BTB domain-containing protein 2 (KBTB2), found in Mus musculus (Mouse).